The sequence spans 98 residues: NADH-ubiquinone oxidoreductase chain 4L (98 aa).

A run of 3 helical transmembrane segments spans residues 1 to 21 (MTSISLNLIMAFSLALAGVLI), 28 to 48 (STLLCLEGMMLSLFILMALLI), and 59 to 79 (APLILLVFSACEAGVGLALLV).

It belongs to the complex I subunit 4L family. Core subunit of respiratory chain NADH dehydrogenase (Complex I) which is composed of 45 different subunits.

Its subcellular location is the mitochondrion inner membrane. It carries out the reaction a ubiquinone + NADH + 5 H(+)(in) = a ubiquinol + NAD(+) + 4 H(+)(out). Its function is as follows. Core subunit of the mitochondrial membrane respiratory chain NADH dehydrogenase (Complex I) which catalyzes electron transfer from NADH through the respiratory chain, using ubiquinone as an electron acceptor. Part of the enzyme membrane arm which is embedded in the lipid bilayer and involved in proton translocation. The polypeptide is NADH-ubiquinone oxidoreductase chain 4L (MT-ND4L) (Vombatus ursinus (Common wombat)).